A 158-amino-acid polypeptide reads, in one-letter code: MSTKAIYPGTFDPMTNGHLDIVTRAALMFDRIVLAVAASPSKKPMFSLEERVALAKEVVAHLPNVDVVGFSDLLANFAKAQQANVLVRGLRAVSDFEFEMQLAQMNRHLMDTLDSVFLMPSEQYSFISSSLMKEVARHGGDVETFLPAPVYKALKARL.

Thr10 is a binding site for substrate. ATP is bound by residues 10–11 (TF) and His18. Substrate-binding residues include Lys42, Leu74, and Arg88. ATP is bound by residues 89-91 (GLR), Glu99, and 124-130 (YSFISSS).

It belongs to the bacterial CoaD family. As to quaternary structure, homohexamer. It depends on Mg(2+) as a cofactor.

The protein resides in the cytoplasm. The catalysed reaction is (R)-4'-phosphopantetheine + ATP + H(+) = 3'-dephospho-CoA + diphosphate. It functions in the pathway cofactor biosynthesis; coenzyme A biosynthesis; CoA from (R)-pantothenate: step 4/5. Functionally, reversibly transfers an adenylyl group from ATP to 4'-phosphopantetheine, yielding dephospho-CoA (dPCoA) and pyrophosphate. This Erwinia tasmaniensis (strain DSM 17950 / CFBP 7177 / CIP 109463 / NCPPB 4357 / Et1/99) protein is Phosphopantetheine adenylyltransferase.